The sequence spans 529 residues: MSNPLFLGEVSKRRTFAIISHPDAGKTTITEKVLLFGNAIQKAGTVKGRGNAQHAKSDWMEMEKERGISVTTSVMQFPYNDCLVNLLDTPGHEDFSEDTYRTLTAVDSCLMVIDAAKGVEDRTRKLMEVTRLRDTPIVTFMNKLDRDVRDPMEVLDEVENELGMMCAPITWPIGCGKEFKGVYHIHRDETILYESGHGHEIQEVRIIKGLDNPELDEKVGESLAASVREELELVMGACPEFDHEAFLVGELTPVYFGTALGNFGVDHMLDGLTEWAPAPKTRQAVERDVEATEDKFSGFVFKIQANMDPKHRDRIAFMRIVSGTYTQGMKMNHVRLGKQVSISDAVTFMAGDRSRAEHAYAGDIIGLHNHGTIQIGDTFTQGEALKFSGIPNFAPELFRRIRLKDPLKQKQLLKGLVQLSEEGAVQVFRPLQNNDLIVGAVGVLQFDVVVARLKSEYNVEAIYEGVNVATARWVECGDAKKLDEFQRKNQTNLALDGGDNLTYIAPTMVNLNLAQERFPDIDFRATREH.

The 270-residue stretch at 11–280 (SKRRTFAIIS…GLTEWAPAPK (270 aa)) folds into the tr-type G domain. GTP contacts are provided by residues 20–27 (SHPDAGKT), 88–92 (DTPGH), and 142–145 (NKLD).

Belongs to the TRAFAC class translation factor GTPase superfamily. Classic translation factor GTPase family. PrfC subfamily.

It localises to the cytoplasm. Functionally, increases the formation of ribosomal termination complexes and stimulates activities of RF-1 and RF-2. It binds guanine nucleotides and has strong preference for UGA stop codons. It may interact directly with the ribosome. The stimulation of RF-1 and RF-2 is significantly reduced by GTP and GDP, but not by GMP. This is Peptide chain release factor 3 from Vibrio campbellii (strain ATCC BAA-1116).